The chain runs to 980 residues: Vacuolar protein sorting-associated protein 11 homolog (980 aa).

Residues 407 to 554 (YKETIGMLEP…GRDLLIHARD (148 aa)) form a CHCR repeat. The segment at 803–843 (CSACDTPLQLPTVHFLCKHAYHVHCFESYNMDGSDKCPACQ) adopts an RING-type; atypical zinc-finger fold. Basic and acidic residues predominate over residues 886–898 (TKKTKKSEAKKDP). The disordered stretch occupies residues 886–980 (TKKTKKSEAK…APAPSTNPFD (95 aa)). 2 stretches are compositionally biased toward polar residues: residues 917–937 (TTISRTMSTVSSNMATPSRQR) and 947–960 (TNPFFNSDSGTRLS).

This sequence belongs to the VPS11 family. Probable core component of at least two putative endosomal tethering complexes, the homotypic fusion and vacuole protein sorting (HOPS) complex and the class C core vacuole/endosome tethering (CORVET) complex. Their common core is composed of the class C Vps proteins vps-11, vps-16 and vps-18, which in HOPS further associates with vps-33.1, vps-39 and vps-41 and in CORVET with vps-8 and vps-33.2.

It is found in the late endosome membrane. Its subcellular location is the lysosome membrane. Plays a role in vesicle-mediated protein trafficking to lysosomal compartments including the endocytic membrane transport pathways. Believed to act as a core component of the putative HOPS and CORVET endosomal tethering complexes which are proposed to be involved in the rab-5-to-rab-7 endosome conversion probably implicating sand-1, and via binding SNAREs and SNARE complexes to mediate tethering and docking events during SNARE-mediated membrane fusion. The HOPS complex is proposed to be recruited to Rab7 on the late endosomal membrane and to regulate late endocytic, phagocytic and autophagic traffic towards lysosomes. Within the HOPS complex, contributes to the normal development of gut granules in embryonic and adult intestinal cells. The CORVET complex is proposed to function as a Rab5 effector to mediate early endosome fusion probably in specific endosome subpopulations. Required for fusion of endosomes and autophagosomes with lysosomes. Involved in cargo transport from early to late endosomes and required for the transition from early to late endosomes. Possibly has a role in clearance of apoptotic cells during programmed cell death. This Caenorhabditis elegans protein is Vacuolar protein sorting-associated protein 11 homolog.